A 960-amino-acid chain; its full sequence is Phosphoenolpyruvate carboxylase 3 (960 aa).

S8 is modified (phosphoserine). Residues H167 and K597 contribute to the active site.

Belongs to the PEPCase type 1 family. In terms of assembly, homotetramer. It depends on Mg(2+) as a cofactor.

The protein resides in the cytoplasm. The catalysed reaction is oxaloacetate + phosphate = phosphoenolpyruvate + hydrogencarbonate. The protein operates within photosynthesis; C4 acid pathway. Its activity is regulated as follows. By light-reversible phosphorylation. Its function is as follows. Through the carboxylation of phosphoenolpyruvate (PEP) it forms oxaloacetate, a four-carbon dicarboxylic acid source for the tricarboxylic acid cycle. The protein is Phosphoenolpyruvate carboxylase 3 of Sorghum bicolor (Sorghum).